Reading from the N-terminus, the 391-residue chain is S-adenosylmethionine synthase (391 aa).

Positions 1 to 20 (MPRSDYLFTSESVSEGHPDK) are disordered. Position 17 (His17) interacts with ATP. Position 19 (Asp19) interacts with Mg(2+). K(+) is bound at residue Glu45. The L-methionine site is built by Glu58 and Gln102. The interval 102–112 (QSADIAQGVDA) is flexible loop. Residues 169-171 (DAK), 235-236 (KF), Asp244, 250-251 (RK), Ala267, and Lys271 contribute to the ATP site. Asp244 lines the L-methionine pocket. Lys275 is an L-methionine binding site.

The protein belongs to the AdoMet synthase family. In terms of assembly, homotetramer; dimer of dimers. It depends on Mg(2+) as a cofactor. Requires K(+) as cofactor.

Its subcellular location is the cytoplasm. It catalyses the reaction L-methionine + ATP + H2O = S-adenosyl-L-methionine + phosphate + diphosphate. It functions in the pathway amino-acid biosynthesis; S-adenosyl-L-methionine biosynthesis; S-adenosyl-L-methionine from L-methionine: step 1/1. Its function is as follows. Catalyzes the formation of S-adenosylmethionine (AdoMet) from methionine and ATP. The overall synthetic reaction is composed of two sequential steps, AdoMet formation and the subsequent tripolyphosphate hydrolysis which occurs prior to release of AdoMet from the enzyme. The polypeptide is S-adenosylmethionine synthase (Methylorubrum extorquens (strain CM4 / NCIMB 13688) (Methylobacterium extorquens)).